The sequence spans 88 residues: Large ribosomal subunit protein bL27 (88 aa).

The disordered stretch occupies residues 1–24 (MAHKKGTGSTRNGRDSNSKRLGVK).

This sequence belongs to the bacterial ribosomal protein bL27 family.

The sequence is that of Large ribosomal subunit protein bL27 from Prochlorococcus marinus (strain MIT 9313).